A 668-amino-acid chain; its full sequence is Fructose-1,6-bisphosphatase class 3 (668 aa).

Belongs to the FBPase class 3 family. The cofactor is Mn(2+).

The catalysed reaction is beta-D-fructose 1,6-bisphosphate + H2O = beta-D-fructose 6-phosphate + phosphate. Its pathway is carbohydrate biosynthesis; gluconeogenesis. The chain is Fructose-1,6-bisphosphatase class 3 from Clostridium botulinum (strain 657 / Type Ba4).